The sequence spans 122 residues: Holo-[acyl-carrier-protein] synthase (122 aa).

Mg(2+) contacts are provided by D8 and E57.

The protein belongs to the P-Pant transferase superfamily. AcpS family. The cofactor is Mg(2+).

The protein localises to the cytoplasm. The enzyme catalyses apo-[ACP] + CoA = holo-[ACP] + adenosine 3',5'-bisphosphate + H(+). In terms of biological role, transfers the 4'-phosphopantetheine moiety from coenzyme A to a Ser of acyl-carrier-protein. The polypeptide is Holo-[acyl-carrier-protein] synthase (Exiguobacterium sp. (strain ATCC BAA-1283 / AT1b)).